We begin with the raw amino-acid sequence, 611 residues long: Calmegin (611 aa).

The signal sequence occupies residues 1-19 (MRFQGVGLCLGLLFITVNA). Residues 20 to 471 (DFMDDGVEVE…LVIAAEERPW (452 aa)) are Lumenal-facing. An N6-acetyllysine modification is found at Lys-128. Cys-151 and Cys-185 are disulfide-bonded. The disordered stretch occupies residues 254-335 (LDDVVPPINP…KAEKPEDWSD (82 aa)). Positions 265–284 (REIDDPSDKKPEEWDDRAKI) are enriched in basic and acidic residues. 8 consecutive repeat copies span residues 267–280 (IDDP…EWDD), 284–297 (IPDP…DWDE), 303–316 (IEDS…GWLD), 322–335 (IPNP…DWSD), 339–352 (GEWE…PACQ), 356–369 (GEWK…PKYK), 370–383 (GIWR…PNYQ), and 384–397 (GLWS…PDYF). The interval 317–350 (DEPKFIPNPKAEKPEDWSDDMDGEWEAPHIPNPA) is interaction with PPIB. A disulfide bridge connects residues Cys-351 and Cys-355. The helical transmembrane segment at 472 to 492 (LWLMYLVMAGLPVALVASFCW) threads the bilayer. Residues 493 to 611 (PRKVKKKYED…SLRKRRVRKD (119 aa)) are Cytoplasmic-facing. The tract at residues 517–611 (AALEQEAEEE…SLRKRRVRKD (95 aa)) is disordered. Over residues 526 to 584 (EKAPEKPEDVQEEKKPGEAEVVTVEKEVIGEPEEKSKEDRETLEGQEEVSKLSKSGSED) the composition is skewed to basic and acidic residues. A phosphoserine mark is found at Ser-561, Ser-578, Ser-580, Ser-582, Ser-592, Ser-595, and Ser-602. A compositionally biased stretch (basic residues) spans 602–611 (SLRKRRVRKD).

Belongs to the calreticulin family. In terms of assembly, interacts with PDILT and PPIB. Interacts with ADAM2. Interacts with ADAM1A, ADAM1B and ADAM3; these are protein-coding genes in mouse but may be pseudogenes in other organisms. As to expression, detected in testis (at protein level). Detected in testis.

It is found in the endoplasmic reticulum membrane. In terms of biological role, functions during spermatogenesis as a chaperone for a range of client proteins that are important for sperm adhesion onto the egg zona pellucida and for subsequent penetration of the zona pellucida. Required for normal sperm migration from the uterus into the oviduct. Required for normal male fertility. Binds calcium ions. In Mus musculus (Mouse), this protein is Calmegin (Clgn).